A 528-amino-acid polypeptide reads, in one-letter code: Lanosterol 14-alpha demethylase (528 aa).

A helical transmembrane segment spans residues 15 to 37 (LSLSVTQQISILLGVPFVYNLVW). Tyrosine 64 is an oteseconazole binding site. Tyrosine 118 is a binding site for itraconazole. Position 307 (glycine 307) interacts with posaconazole. Residue histidine 377 coordinates oteseconazole. Residue cysteine 470 participates in heme binding.

This sequence belongs to the cytochrome P450 family. The cofactor is heme.

The protein resides in the endoplasmic reticulum membrane. The enzyme catalyses a 14alpha-methyl steroid + 3 reduced [NADPH--hemoprotein reductase] + 3 O2 = a Delta(14) steroid + formate + 3 oxidized [NADPH--hemoprotein reductase] + 4 H2O + 4 H(+). It catalyses the reaction a 14alpha-methyl steroid + reduced [NADPH--hemoprotein reductase] + O2 = a 14alpha-hydroxymethyl steroid + oxidized [NADPH--hemoprotein reductase] + H2O + H(+). It carries out the reaction a 14alpha-hydroxymethyl steroid + reduced [NADPH--hemoprotein reductase] + O2 = a 14alpha-formyl steroid + oxidized [NADPH--hemoprotein reductase] + 2 H2O + H(+). The catalysed reaction is a 14alpha-formyl steroid + reduced [NADPH--hemoprotein reductase] + O2 = a Delta(14) steroid + formate + oxidized [NADPH--hemoprotein reductase] + H2O + 2 H(+). The enzyme catalyses lanosterol + 3 reduced [NADPH--hemoprotein reductase] + 3 O2 = 4,4-dimethyl-5alpha-cholesta-8,14,24-trien-3beta-ol + formate + 3 oxidized [NADPH--hemoprotein reductase] + 4 H2O + 4 H(+). It catalyses the reaction lanosterol + reduced [NADPH--hemoprotein reductase] + O2 = 32-hydroxylanosterol + oxidized [NADPH--hemoprotein reductase] + H2O + H(+). It carries out the reaction 32-hydroxylanosterol + reduced [NADPH--hemoprotein reductase] + O2 = 32-oxolanosterol + oxidized [NADPH--hemoprotein reductase] + 2 H2O + H(+). The catalysed reaction is 32-oxolanosterol + reduced [NADPH--hemoprotein reductase] + O2 = 4,4-dimethyl-5alpha-cholesta-8,14,24-trien-3beta-ol + formate + oxidized [NADPH--hemoprotein reductase] + H2O + 2 H(+). The enzyme catalyses eburicol + 3 reduced [NADPH--hemoprotein reductase] + 3 O2 = 14-demethyleburicol + formate + 3 oxidized [NADPH--hemoprotein reductase] + 4 H2O + 4 H(+). It catalyses the reaction eburicol + reduced [NADPH--hemoprotein reductase] + O2 = 32-hydroxyeburicol + oxidized [NADPH--hemoprotein reductase] + H2O + H(+). It carries out the reaction 32-hydroxyeburicol + reduced [NADPH--hemoprotein reductase] + O2 = 32-oxoeburicol + oxidized [NADPH--hemoprotein reductase] + 2 H2O + H(+). The catalysed reaction is 32-oxoeburicol + reduced [NADPH--hemoprotein reductase] + O2 = 14-demethyleburicol + formate + oxidized [NADPH--hemoprotein reductase] + H2O + 2 H(+). It functions in the pathway steroid biosynthesis; zymosterol biosynthesis; zymosterol from lanosterol: step 1/6. With respect to regulation, the catalytic activity is inhibited by the binding of azoles clotrimazole, miconazole, fluconazole, ketoconazole, oteseconazole (VT-1161), tetraconazole, the triazole SCH39304, and the triazole derivative ICI 153066. Its function is as follows. Sterol 14alpha-demethylase that plays a critical role in the third module of ergosterol biosynthesis pathway, being ergosterol the major sterol component in fungal membranes that participates in a variety of functions. The third module or late pathway involves the ergosterol synthesis itself through consecutive reactions that mainly occur in the endoplasmic reticulum (ER) membrane. In filamentous fungi, during the initial step of this module, lanosterol (lanosta-8,24-dien-3beta-ol) can be metabolized to eburicol. Sterol 14alpha-demethylase catalyzes the three-step oxidative removal of the 14alpha-methyl group (C-32) of both these sterols in the form of formate, and converts eburicol and lanosterol to 14-demethyleburicol (4,4,24-trimethylergosta-8,14,24(28)-trienol) and 4,4-dimethyl-5alpha-cholesta-8,14,24-trien-3beta-ol, respectively, which are further metabolized by other enzymes in the pathway to ergosterol. Can also use substrates not intrinsic to fungi, such as 24,25-dihydrolanosterol (DHL), producing 4,4-dimethyl-8,14-cholestadien-3-beta-ol, but at lower rates than the endogenous substrates. The chain is Lanosterol 14-alpha demethylase from Candida albicans (strain SC5314 / ATCC MYA-2876) (Yeast).